The chain runs to 318 residues: L-lactate dehydrogenase (318 aa).

NAD(+)-binding positions include valine 18, aspartate 39, lysine 44, tyrosine 69, and 83–84 (GA). Substrate-binding residues include glutamine 86 and arginine 92. NAD(+)-binding positions include serine 105, 122 to 124 (VSN), and serine 147. A substrate-binding site is contributed by 124–127 (NPVD). Residue 152-155 (DTSR) coordinates substrate. Histidine 179 functions as the Proton acceptor in the catalytic mechanism. Phosphotyrosine is present on tyrosine 225. Threonine 234 lines the substrate pocket.

The protein belongs to the LDH/MDH superfamily. LDH family. In terms of assembly, homotetramer.

It localises to the cytoplasm. It carries out the reaction (S)-lactate + NAD(+) = pyruvate + NADH + H(+). It functions in the pathway fermentation; pyruvate fermentation to lactate; (S)-lactate from pyruvate: step 1/1. In terms of biological role, catalyzes the conversion of lactate to pyruvate. The protein is L-lactate dehydrogenase of Clostridium botulinum (strain Langeland / NCTC 10281 / Type F).